Consider the following 204-residue polypeptide: ATP phosphoribosyltransferase (204 aa).

It belongs to the ATP phosphoribosyltransferase family. Short subfamily. In terms of assembly, heteromultimer composed of HisG and HisZ subunits.

The protein localises to the cytoplasm. It carries out the reaction 1-(5-phospho-beta-D-ribosyl)-ATP + diphosphate = 5-phospho-alpha-D-ribose 1-diphosphate + ATP. The protein operates within amino-acid biosynthesis; L-histidine biosynthesis; L-histidine from 5-phospho-alpha-D-ribose 1-diphosphate: step 1/9. In terms of biological role, catalyzes the condensation of ATP and 5-phosphoribose 1-diphosphate to form N'-(5'-phosphoribosyl)-ATP (PR-ATP). Has a crucial role in the pathway because the rate of histidine biosynthesis seems to be controlled primarily by regulation of HisG enzymatic activity. This Staphylococcus aureus (strain Mu3 / ATCC 700698) protein is ATP phosphoribosyltransferase.